The primary structure comprises 306 residues: 2-phospho-L-lactate transferase (306 aa).

The 7,8-didemethyl-8-hydroxy-5-deazariboflavin site is built by aspartate 54 and arginine 93.

The protein belongs to the CofD family. As to quaternary structure, homodimer. Mg(2+) is required as a cofactor.

It carries out the reaction (2S)-lactyl-2-diphospho-5'-guanosine + 7,8-didemethyl-8-hydroxy-5-deazariboflavin = oxidized coenzyme F420-0 + GMP + H(+). Its pathway is cofactor biosynthesis; coenzyme F420 biosynthesis. Its function is as follows. Catalyzes the transfer of the 2-phospholactate moiety from (2S)-lactyl-2-diphospho-5'-guanosine to 7,8-didemethyl-8-hydroxy-5-deazariboflavin (FO) with the formation of oxidized coenzyme F420-0 and GMP. The sequence is that of 2-phospho-L-lactate transferase from Methanothermobacter thermautotrophicus (strain ATCC 29096 / DSM 1053 / JCM 10044 / NBRC 100330 / Delta H) (Methanobacterium thermoautotrophicum).